The primary structure comprises 247 residues: uncharacterized protein (247 aa).

A signal peptide spans 1-35; that stretch reads MWGPGVTAEGLSVAPAPPPLLPLLLLLALALVAPS. Residues 82 to 102 form a helical membrane-spanning segment; it reads LSGLLILLVLFAIGYFLQRII. Positions 109 to 176 are disordered; the sequence is YPRGQARPGQ…RGSGGRLPPS (68 aa). Low complexity predominate over residues 111–120; it reads RGQARPGQAR. Gly residues predominate over residues 161-171; that stretch reads SGGGRGRGSGG.

It is found in the membrane. This is an uncharacterized protein from Mus musculus (Mouse).